The following is a 384-amino-acid chain: Chaperone protein DnaJ (384 aa).

The 66-residue stretch at 6 to 71 (DYYEVLGISK…TKRKTYDQFG (66 aa)) folds into the J domain. A CR-type zinc finger spans residues 141–223 (GKKMSIKVNR…CHGTGNTRKV (83 aa)). The Zn(2+) site is built by Cys154, Cys157, Cys171, Cys174, Cys197, Cys200, Cys211, and Cys214. CXXCXGXG motif repeat units lie at residues 154–161 (CEECNGTG), 171–178 (CSTCNGTG), 197–204 (CSACNGTG), and 211–218 (CSKCHGTG).

It belongs to the DnaJ family. As to quaternary structure, homodimer. Requires Zn(2+) as cofactor.

It localises to the cytoplasm. In terms of biological role, participates actively in the response to hyperosmotic and heat shock by preventing the aggregation of stress-denatured proteins and by disaggregating proteins, also in an autonomous, DnaK-independent fashion. Unfolded proteins bind initially to DnaJ; upon interaction with the DnaJ-bound protein, DnaK hydrolyzes its bound ATP, resulting in the formation of a stable complex. GrpE releases ADP from DnaK; ATP binding to DnaK triggers the release of the substrate protein, thus completing the reaction cycle. Several rounds of ATP-dependent interactions between DnaJ, DnaK and GrpE are required for fully efficient folding. Also involved, together with DnaK and GrpE, in the DNA replication of plasmids through activation of initiation proteins. This chain is Chaperone protein DnaJ, found in Clostridioides difficile (strain 630) (Peptoclostridium difficile).